Consider the following 610-residue polypeptide: Protein mono-ADP-ribosyltransferase PARP6 (610 aa).

The region spanning 374–600 (EMTQGSYLEI…QDPKIQKEIM (227 aa)) is the PARP catalytic domain. Residue Asp580 is modified to ADP-ribosyl aspartic acid.

It belongs to the ARTD/PARP family. Auto-mono-ADP-ribosylated.

It carries out the reaction L-aspartyl-[protein] + NAD(+) = 4-O-(ADP-D-ribosyl)-L-aspartyl-[protein] + nicotinamide. The enzyme catalyses L-cysteinyl-[protein] + NAD(+) = S-(ADP-D-ribosyl)-L-cysteinyl-[protein] + nicotinamide + H(+). Its function is as follows. Mono-ADP-ribosyltransferase that mediates mono-ADP-ribosylation of target proteins. This Pongo abelii (Sumatran orangutan) protein is Protein mono-ADP-ribosyltransferase PARP6.